A 226-amino-acid polypeptide reads, in one-letter code: Transmembrane gamma-carboxyglutamic acid protein 4 (226 aa).

The N-terminal stretch at 1–17 (MFTLLVLLSQLPTVTLG) is a signal peptide. The propeptide occupies 18–49 (FPHCARGPKASKHAGEEVFTSKEEANFFIHRR). Over 50–113 (LLYNRFDLEL…KSDGNREKID (64 aa)) the chain is Extracellular. The Gla domain maps to 52–98 (YNRFDLELFTPGNLERECNEELCNYEEAREIFVDEDKTIAFWQEYSA). The cysteines at positions 69 and 74 are disulfide-linked. The residue at position 72 (Glu72) is a 4-carboxyglutamate. Residues 114 to 134 (VMGLLTGLIAAGVFLVIFGLL) traverse the membrane as a helical segment. Topologically, residues 135 to 226 (GYYLCITKCN…FKKSMSLPSH (92 aa)) are cytoplasmic. Position 163 is a phosphoserine (Ser163). Residues 186–189 (LPSY) carry the LPXY motif; mediates binding to WW domain-containing proteins motif. The short motif at 204–207 (PPPY) is the PPXY motif; mediates binding to WW domain-containing proteins element.

The protein belongs to the commissureless family. Interacts (via cytoplasmic domain) with WW domain-containing proteins MAGI1, MAGI3, NEDD4, NEDD4L, WWTR1/TAZ and YAP1. Post-translationally, gamma-carboxyglutamate residues are formed by vitamin K dependent carboxylation. These residues are essential for the binding of calcium. In terms of tissue distribution, widely expressed with highest levels in kidney.

It localises to the endoplasmic reticulum-Golgi intermediate compartment membrane. The protein resides in the cell membrane. In terms of biological role, may control axon guidance across the CNS. Prevents the delivery of ROBO1 at the cell surface and down-regulates its expression. This chain is Transmembrane gamma-carboxyglutamic acid protein 4, found in Homo sapiens (Human).